The following is an 87-amino-acid chain: uncharacterized protein (87 aa).

This is an uncharacterized protein from Methanocaldococcus jannaschii (strain ATCC 43067 / DSM 2661 / JAL-1 / JCM 10045 / NBRC 100440) (Methanococcus jannaschii).